Reading from the N-terminus, the 300-residue chain is Acetylglutamate kinase (300 aa).

Residues 72–73 (GG), R94, and N197 contribute to the substrate site.

This sequence belongs to the acetylglutamate kinase family. ArgB subfamily.

It localises to the cytoplasm. It catalyses the reaction N-acetyl-L-glutamate + ATP = N-acetyl-L-glutamyl 5-phosphate + ADP. It participates in amino-acid biosynthesis; L-arginine biosynthesis; N(2)-acetyl-L-ornithine from L-glutamate: step 2/4. Its function is as follows. Catalyzes the ATP-dependent phosphorylation of N-acetyl-L-glutamate. The protein is Acetylglutamate kinase of Azoarcus sp. (strain BH72).